Reading from the N-terminus, the 744-residue chain is Polyribonucleotide nucleotidyltransferase (744 aa).

Residues D487 and D493 each coordinate Mg(2+). One can recognise a KH domain in the interval 554–613 (PSTTTLKVDKDKIRDIIGPGGKVIKEICETSGAKIDISDDGTVSIYASDKDKLKVALDKV). The S1 motif domain maps to 623–691 (GEVFNGTVMK…NKGKAKLTIK (69 aa)). Residues 691 to 744 (KNAEKDKSSANPKPKNSPKEHQEPEKRDNGKKRAWNEDNNAETTEVVTERKYFS) are disordered. The segment covering 707-718 (SPKEHQEPEKRD) has biased composition (basic and acidic residues). Residues 727–736 (EDNNAETTEV) show a composition bias toward polar residues.

Belongs to the polyribonucleotide nucleotidyltransferase family. It depends on Mg(2+) as a cofactor.

It is found in the cytoplasm. It carries out the reaction RNA(n+1) + phosphate = RNA(n) + a ribonucleoside 5'-diphosphate. Its function is as follows. Involved in mRNA degradation. Catalyzes the phosphorolysis of single-stranded polyribonucleotides processively in the 3'- to 5'-direction. In Rickettsia bellii (strain OSU 85-389), this protein is Polyribonucleotide nucleotidyltransferase.